The chain runs to 78 residues: UPF0291 protein MCCL_0996 (78 aa).

Belongs to the UPF0291 family.

It is found in the cytoplasm. The sequence is that of UPF0291 protein MCCL_0996 from Macrococcus caseolyticus (strain JCSC5402) (Macrococcoides caseolyticum).